The chain runs to 254 residues: Decaprenylphosphoryl-2-keto-beta-D-erythro-pentose reductase (254 aa).

Asp-67 contacts NAD(+). Tyr-160 functions as the Proton acceptor in the catalytic mechanism. Lys-164 contributes to the NAD(+) binding site.

The protein belongs to the short-chain dehydrogenases/reductases (SDR) family. As to quaternary structure, interacts with DprE1 to form an epimerase complex.

The protein localises to the periplasm. It carries out the reaction trans,octa-cis-decaprenylphospho-beta-D-arabinofuranose + NAD(+) = trans,octa-cis-decaprenylphospho-beta-D-erythro-pentofuranosid-2-ulose + NADH + H(+). It participates in cell wall biogenesis; cell wall polysaccharide biosynthesis. In terms of biological role, component of the DprE1-DprE2 complex that catalyzes the 2-step epimerization of decaprenyl-phospho-ribose (DPR) to decaprenyl-phospho-arabinose (DPA), a key precursor that serves as the arabinose donor required for the synthesis of cell-wall arabinans. DprE1 catalyzes the first step of epimerization, namely FAD-dependent oxidation of the C2' hydroxyl of DPR to yield the keto intermediate decaprenyl-phospho-2'-keto-D-arabinose (DPX). The intermediate DPX is then transferred to DprE2 subunit of the epimerase complex, most probably through a 'substrate channel' at the interface of DprE1-DprE2 complex. DprE2 then catalyzes the second step of epimerization, the NAD(+)-dependent reduction of DPX that leads to the formation of DPA. The polypeptide is Decaprenylphosphoryl-2-keto-beta-D-erythro-pentose reductase (Mycobacterium bovis (strain ATCC BAA-935 / AF2122/97)).